Here is a 325-residue protein sequence, read N- to C-terminus: Tetraacyldisaccharide 4'-kinase (325 aa).

Position 55-62 (55-62 (TAGGNGKT)) interacts with ATP.

The protein belongs to the LpxK family.

The catalysed reaction is a lipid A disaccharide + ATP = a lipid IVA + ADP + H(+). Its pathway is glycolipid biosynthesis; lipid IV(A) biosynthesis; lipid IV(A) from (3R)-3-hydroxytetradecanoyl-[acyl-carrier-protein] and UDP-N-acetyl-alpha-D-glucosamine: step 6/6. Functionally, transfers the gamma-phosphate of ATP to the 4'-position of a tetraacyldisaccharide 1-phosphate intermediate (termed DS-1-P) to form tetraacyldisaccharide 1,4'-bis-phosphate (lipid IVA). The chain is Tetraacyldisaccharide 4'-kinase from Salmonella choleraesuis (strain SC-B67).